The sequence spans 476 residues: Protein transport protein Sec61 subunit alpha isoform 1 (476 aa).

Residues 2-28 (AIKFLEVIKPFCVILPEIQKPERKIQF) lie on the Cytoplasmic side of the membrane. Residues 29–46 (KEKVLWTAITLFIFLVCC) traverse the membrane as a helical segment. Residues 47–80 (QIPLFGIMSSDSADPFYWMRVILASNRGTLMELG) are Lumenal-facing. The helical transmembrane segment at 81–97 (ISPIVTSGLIMQLLAGA) threads the bilayer. The Cytoplasmic portion of the chain corresponds to 98–109 (KIIEVGDTPKDR). A helical membrane pass occupies residues 110–131 (ALFNGAQKLFGMIITIGQSIVY). Residues 132-148 (VMTGMYGDPSEMGAGIC) are Lumenal-facing. Residues 149-167 (LLITIQLFVAGLIVLLLDE) traverse the membrane as a helical segment. At 168–177 (LLQKGYGLGS) the chain is on the cytoplasmic side. A helical membrane pass occupies residues 178-196 (GISLFIATNICETIVWKAF). Over 197 to 241 (SPTTVNTGRGMEFEGAIIALFHLLATRTDKVRALREAFYRQNLPN) the chain is Lumenal. A helical membrane pass occupies residues 242–259 (LMNLIATIFVFAVVIYFQ). Residues 260–285 (GFRVDLPIKSARYRGQYNTYPIKLFY) are Cytoplasmic-facing. A helical transmembrane segment spans residues 286–306 (TSNIPIILQSALVSNLYVISQ). The Lumenal portion of the chain corresponds to 307–356 (MLSARFSGNLLVSLLGTWSDTSSGGPARAYPVGGLCHYLSPPESFGSVLE). The helical transmembrane segment at 357–379 (DPVHAVVYIVFMLGSCAFFSKTW) threads the bilayer. Topologically, residues 380–420 (IEVSGSSAKDVAKQLKEQQMVMRGHRETSMVHELNRYIPTA) are cytoplasmic. The chain crosses the membrane as a helical span at residues 421-437 (AAFGGLCIGALSVLADF). The Lumenal segment spans residues 438–443 (LGAIGS). Residues 444–458 (GTGILLAVTIIYQYF) form a helical membrane-spanning segment. Residues 459–476 (EIFVKEQSEVGSMGALLF) lie on the Cytoplasmic side of the membrane.

It belongs to the SecY/SEC61-alpha family. As to quaternary structure, the SEC61 channel-forming translocon complex consists of channel-forming core components SEC61A1, SEC61B and SEC61G and different auxiliary components such as SEC62 and SEC63. The SEC61 channel associates with the multi-pass translocon (MPT) complex.

Its subcellular location is the endoplasmic reticulum membrane. Its function is as follows. Component of SEC61 channel-forming translocon complex that mediates transport of signal peptide-containing precursor polypeptides across the endoplasmic reticulum (ER). Forms a ribosome receptor and a gated pore in the ER membrane, both functions required for cotranslational translocation of nascent polypeptides. May cooperate with auxiliary protein SEC62, SEC63 and HSPA5/BiP to enable post-translational transport of small presecretory proteins. The SEC61 channel is also involved in ER membrane insertion of transmembrane proteins: it mediates membrane insertion of the first few transmembrane segments of proteins, while insertion of subsequent transmembrane regions of multi-pass membrane proteins is mediated by the multi-pass translocon (MPT) complex. The SEC61 channel cooperates with the translocating protein TRAM1 to import nascent proteins into the ER. Controls the passive efflux of calcium ions from the ER lumen to the cytosol through SEC61 channel, contributing to the maintenance of cellular calcium homeostasis. Plays a critical role in nephrogenesis, specifically at pronephros stage. In Canis lupus familiaris (Dog), this protein is Protein transport protein Sec61 subunit alpha isoform 1 (SEC61A1).